The sequence spans 333 residues: Glutamyl endopeptidase (333 aa).

Residues 1–29 (MKGKFLKVSSLFVATLTTATLVSSPAANA) form the signal peptide. A propeptide spanning residues 30–68 (LSSKAMDNHPQQSQSSKQQTPKIQKGGNLKPLEQREHAN) is cleaved from the precursor. The disordered stretch occupies residues 33–61 (KAMDNHPQQSQSSKQQTPKIQKGGNLKPL). Over residues 40–54 (QQSQSSKQQTPKIQK) the composition is skewed to low complexity. Catalysis depends on charge relay system residues His119, Asp161, and Ser237. The disordered stretch occupies residues 283–333 (FANDDQPNNPDNPDNPNNPDNPNNPDNPNNPNNPDNPDNGDNNNSDNPDAA). The span at 286-333 (DDQPNNPDNPDNPNNPDNPNNPDNPNNPNNPDNPDNGDNNNSDNPDAA) shows a compositional bias: low complexity. 11 repeat units span residues 289–291 (PNN), 292–294 (PDN), 295–297 (PDN), 298–300 (PNN), 301–303 (PDN), 304–306 (PNN), 307–309 (PDN), 310–312 (PNN), 313–315 (PNN), 316–318 (PDN), and 319–321 (PDN). The interval 289 to 321 (PNNPDNPDNPNNPDNPNNPDNPNNPNNPDNPDN) is 11 X 3 AA repeats of P-[DN]-N.

Belongs to the peptidase S1B family. In terms of processing, proteolytically cleaved by aureolysin (aur). This cleavage leads to the activation of SspA.

The protein localises to the secreted. The catalysed reaction is Preferential cleavage: Glu-|-Xaa, Asp-|-Xaa.. Preferentially cleaves peptide bonds on the carboxyl-terminal side of aspartate and glutamate. Along with other extracellular proteases it is involved in colonization and infection of human tissues. Required for proteolytic maturation of thiol protease SspB and inactivation of SspC, an inhibitor of SspB. It is the most important protease for degradation of fibronectin-binding protein (FnBP) and surface protein A, which are involved in adherence to host cells. May also protect bacteria against host defense mechanism by cleaving the immunoglobulin classes IgG, IgA and IgM. May be involved in the stability of secreted lipases. This Staphylococcus aureus (strain MSSA476) protein is Glutamyl endopeptidase (sspA).